The following is a 388-amino-acid chain: Protein SopA (388 aa).

The protein belongs to the ParA family.

In terms of biological role, this protein is essential for plasmid partition. It ensures the proper distribution of newly replicated plasmids to daughter cells during cell division. SopA is trans-acting. In Escherichia coli O157:H7, this protein is Protein SopA (sopA).